Here is a 375-residue protein sequence, read N- to C-terminus: 23S rRNA (uracil(747)-C(5))-methyltransferase RlmC (375 aa).

[4Fe-4S] cluster contacts are provided by cysteine 3, cysteine 11, cysteine 14, and cysteine 87. Residues glutamine 212, phenylalanine 241, glutamate 262, and asparagine 307 each coordinate S-adenosyl-L-methionine. The active-site Nucleophile is the cysteine 334.

Belongs to the class I-like SAM-binding methyltransferase superfamily. RNA M5U methyltransferase family. RlmC subfamily.

The enzyme catalyses uridine(747) in 23S rRNA + S-adenosyl-L-methionine = 5-methyluridine(747) in 23S rRNA + S-adenosyl-L-homocysteine + H(+). In terms of biological role, catalyzes the formation of 5-methyl-uridine at position 747 (m5U747) in 23S rRNA. The polypeptide is 23S rRNA (uracil(747)-C(5))-methyltransferase RlmC (Escherichia coli O17:K52:H18 (strain UMN026 / ExPEC)).